Consider the following 210-residue polypeptide: ATP-dependent Clp protease proteolytic subunit (210 aa).

Serine 113 (nucleophile) is an active-site residue. Histidine 138 is a catalytic residue.

Belongs to the peptidase S14 family. As to quaternary structure, fourteen ClpP subunits assemble into 2 heptameric rings which stack back to back to give a disk-like structure with a central cavity, resembling the structure of eukaryotic proteasomes.

Its subcellular location is the cytoplasm. The catalysed reaction is Hydrolysis of proteins to small peptides in the presence of ATP and magnesium. alpha-casein is the usual test substrate. In the absence of ATP, only oligopeptides shorter than five residues are hydrolyzed (such as succinyl-Leu-Tyr-|-NHMec, and Leu-Tyr-Leu-|-Tyr-Trp, in which cleavage of the -Tyr-|-Leu- and -Tyr-|-Trp bonds also occurs).. In terms of biological role, cleaves peptides in various proteins in a process that requires ATP hydrolysis. Has a chymotrypsin-like activity. Plays a major role in the degradation of misfolded proteins. This is ATP-dependent Clp protease proteolytic subunit from Marinomonas sp. (strain MWYL1).